We begin with the raw amino-acid sequence, 112 residues long: Putative RNase TTE0752 (112 aa).

Residues R74 and H79 contribute to the active site. The RX(4)HXY motif signature appears at 74 to 81 (RDKLIHEY). The residue at position 81 (Y81) is an O-di-AMP-tyrosine.

This sequence belongs to the HepT RNase toxin family. As to quaternary structure, homodimer, probably forms a complex with cognate antitoxin TTE0751. Modified by cognate antitoxin TTE0751; probably at least 2 successive AMPylation events occur on Tyr-81.

Functionally, probable toxic component of a putative type VII toxin-antitoxin (TA) system, probably an RNase. Probably neutralized by cognate antitoxin TTE0751. Neutralization may be due to AMPylation by TTE0751. The chain is Putative RNase TTE0752 from Caldanaerobacter subterraneus subsp. tengcongensis (strain DSM 15242 / JCM 11007 / NBRC 100824 / MB4) (Thermoanaerobacter tengcongensis).